The primary structure comprises 76 residues: Small ribosomal subunit protein eS17 (76 aa).

It belongs to the eukaryotic ribosomal protein eS17 family.

This Metallosphaera sedula (strain ATCC 51363 / DSM 5348 / JCM 9185 / NBRC 15509 / TH2) protein is Small ribosomal subunit protein eS17.